The primary structure comprises 401 residues: Riboflavin biosynthesis protein RibBA (401 aa).

Positions 1-203 are DHBP synthase; sequence MTDFQFSKVE…IQQLQEYRRK (203 aa). Residues 30–31, Asp35, 142–146, and Glu166 contribute to the D-ribulose 5-phosphate site; these read RE and RNGHT. Glu31 contacts Mg(2+). Residue His145 participates in Mg(2+) binding. The tract at residues 204-401 is GTP cyclohydrolase II; the sequence is HDSLVKQISV…QIKMGHMFNF (198 aa). 254–258 lines the GTP pocket; the sequence is RIHSE. 3 residues coordinate Zn(2+): Cys259, Cys270, and Cys272. Residues Gln275, 297–299, and Thr319 contribute to the GTP site; that span reads EGR. The active-site Proton acceptor; for GTP cyclohydrolase activity is Asp331. Arg333 functions as the Nucleophile; for GTP cyclohydrolase activity in the catalytic mechanism. Residues Thr354 and Lys359 each coordinate GTP.

It in the N-terminal section; belongs to the DHBP synthase family. This sequence in the C-terminal section; belongs to the GTP cyclohydrolase II family. Mg(2+) serves as cofactor. Requires Mn(2+) as cofactor. It depends on Zn(2+) as a cofactor.

The enzyme catalyses D-ribulose 5-phosphate = (2S)-2-hydroxy-3-oxobutyl phosphate + formate + H(+). It carries out the reaction GTP + 4 H2O = 2,5-diamino-6-hydroxy-4-(5-phosphoribosylamino)-pyrimidine + formate + 2 phosphate + 3 H(+). The protein operates within cofactor biosynthesis; riboflavin biosynthesis; 2-hydroxy-3-oxobutyl phosphate from D-ribulose 5-phosphate: step 1/1. It functions in the pathway cofactor biosynthesis; riboflavin biosynthesis; 5-amino-6-(D-ribitylamino)uracil from GTP: step 1/4. In terms of biological role, catalyzes the conversion of D-ribulose 5-phosphate to formate and 3,4-dihydroxy-2-butanone 4-phosphate. Catalyzes the conversion of GTP to 2,5-diamino-6-ribosylamino-4(3H)-pyrimidinone 5'-phosphate (DARP), formate and pyrophosphate. The chain is Riboflavin biosynthesis protein RibBA from Actinobacillus pleuropneumoniae serotype 3 (strain JL03).